The primary structure comprises 453 residues: UDP-N-acetylmuramoylalanine--D-glutamate ligase (453 aa).

120-126 contacts ATP; sequence GSNGKST.

It belongs to the MurCDEF family.

The protein resides in the cytoplasm. The catalysed reaction is UDP-N-acetyl-alpha-D-muramoyl-L-alanine + D-glutamate + ATP = UDP-N-acetyl-alpha-D-muramoyl-L-alanyl-D-glutamate + ADP + phosphate + H(+). It participates in cell wall biogenesis; peptidoglycan biosynthesis. Functionally, cell wall formation. Catalyzes the addition of glutamate to the nucleotide precursor UDP-N-acetylmuramoyl-L-alanine (UMA). The polypeptide is UDP-N-acetylmuramoylalanine--D-glutamate ligase (Nitrosococcus oceani (strain ATCC 19707 / BCRC 17464 / JCM 30415 / NCIMB 11848 / C-107)).